The following is a 159-amino-acid chain: uncharacterized protein (159 aa).

In terms of domain architecture, N-acetyltransferase spans 4 to 153 (IKTDDLTHPA…HSRFLSLTLC (150 aa)).

Belongs to the acetyltransferase family.

This is an uncharacterized protein from Escherichia coli (strain K12).